Consider the following 175-residue polypeptide: Large ribosomal subunit protein uL18 (175 aa).

This sequence belongs to the universal ribosomal protein uL18 family. In terms of assembly, part of the 50S ribosomal subunit. Contacts the 5S and 23S rRNAs.

Functionally, this is one of the proteins that bind and probably mediate the attachment of the 5S RNA into the large ribosomal subunit, where it forms part of the central protuberance. In Methanospirillum hungatei JF-1 (strain ATCC 27890 / DSM 864 / NBRC 100397 / JF-1), this protein is Large ribosomal subunit protein uL18.